Reading from the N-terminus, the 449-residue chain is Tubulin alpha-8 chain (449 aa).

The MREC motif motif lies at Met1–Cys4. Residues Gln11, Glu71, Ser140, Gly144, Thr145, Thr179, Asn206, and Asn228 each coordinate GTP. Glu71 is a binding site for Mg(2+). The active site involves Glu254.

It belongs to the tubulin family. In terms of assembly, dimer of alpha and beta chains. A typical microtubule is a hollow water-filled tube with an outer diameter of 25 nm and an inner diameter of 15 nM. Alpha-beta heterodimers associate head-to-tail to form protofilaments running lengthwise along the microtubule wall with the beta-tubulin subunit facing the microtubule plus end conferring a structural polarity. Microtubules usually have 13 protofilaments but different protofilament numbers can be found in some organisms and specialized cells. Requires Mg(2+) as cofactor. In terms of processing, some glutamate residues at the C-terminus are polyglycylated, resulting in polyglycine chains on the gamma-carboxyl group. Glycylation is mainly limited to tubulin incorporated into axonemes (cilia and flagella) whereas glutamylation is prevalent in neuronal cells, centrioles, axonemes, and the mitotic spindle. Both modifications can coexist on the same protein on adjacent residues, and lowering polyglycylation levels increases polyglutamylation, and reciprocally. Cilia and flagella glycylation is required for their stability and maintenance. Flagella glycylation controls sperm motility. Post-translationally, some glutamate residues at the C-terminus are polyglutamylated, resulting in polyglutamate chains on the gamma-carboxyl group. Polyglutamylation plays a key role in microtubule severing by spastin (SPAST). SPAST preferentially recognizes and acts on microtubules decorated with short polyglutamate tails: severing activity by SPAST increases as the number of glutamates per tubulin rises from one to eight, but decreases beyond this glutamylation threshold. Glutamylation is also involved in cilia motility. The C-terminal phenylalanine residue is cleaved by MATCAP1/KIAA0895L.

It localises to the cytoplasm. It is found in the cytoskeleton. The enzyme catalyses GTP + H2O = GDP + phosphate + H(+). Functionally, tubulin is the major constituent of microtubules, a cylinder consisting of laterally associated linear protofilaments composed of alpha- and beta-tubulin heterodimers. Microtubules grow by the addition of GTP-tubulin dimers to the microtubule end, where a stabilizing cap forms. Below the cap, tubulin dimers are in GDP-bound state, owing to GTPase activity of alpha-tubulin. This Rattus norvegicus (Rat) protein is Tubulin alpha-8 chain (Tuba8).